Reading from the N-terminus, the 290-residue chain is 4-hydroxy-tetrahydrodipicolinate synthase (290 aa).

Threonine 45 lines the pyruvate pocket. The Proton donor/acceptor role is filled by tyrosine 133. The active-site Schiff-base intermediate with substrate is the lysine 161. A pyruvate-binding site is contributed by isoleucine 202.

The protein belongs to the DapA family. As to quaternary structure, homotetramer; dimer of dimers.

Its subcellular location is the cytoplasm. The enzyme catalyses L-aspartate 4-semialdehyde + pyruvate = (2S,4S)-4-hydroxy-2,3,4,5-tetrahydrodipicolinate + H2O + H(+). The protein operates within amino-acid biosynthesis; L-lysine biosynthesis via DAP pathway; (S)-tetrahydrodipicolinate from L-aspartate: step 3/4. Functionally, catalyzes the condensation of (S)-aspartate-beta-semialdehyde [(S)-ASA] and pyruvate to 4-hydroxy-tetrahydrodipicolinate (HTPA). The chain is 4-hydroxy-tetrahydrodipicolinate synthase from Alkalilimnicola ehrlichii (strain ATCC BAA-1101 / DSM 17681 / MLHE-1).